The primary structure comprises 243 residues: Aldehyde decarbonylase (243 aa).

E45, E73, H76, E128, and H160 together coordinate Fe cation.

The protein belongs to the aldehyde decarbonylase family. The cofactor is Binds 2 metal cations per subunit. The catalytic dinuclear metal-binding site could be either a di-iron or a manganese-iron cofactor..

It catalyses the reaction a long-chain fatty aldehyde + 2 NADPH + O2 + H(+) = a long-chain alkane + formate + 2 NADP(+) + H2O. In terms of biological role, catalyzes the decarbonylation of fatty aldehydes to alkanes. Requires the presence of ferredoxin, ferredoxin reductase and NADPH for in vitro decarbonylase activity. Involved in the biosynthesis of alkanes, mainly heptadecane and pentadecane. The chain is Aldehyde decarbonylase from Prochlorococcus marinus (strain MIT 9313).